The sequence spans 856 residues: Envelope glycoprotein GP350 (856 aa).

Topologically, residues 1-809 (MEAALLVCQY…TSQPRFSNLS (809 aa)) are virion surface. Residues N47, N87, N114, N166, N169, N195, N229, N277, N318, N328, N345, N356, N378, N386, N411, N435, N443, N457, N497, N519, N533, N554, N568, N582, N585, N603, and N614 are each glycosylated (N-linked (GlcNAc...) asparagine; by host). The disordered stretch occupies residues 421 to 779 (FSKAPESTTT…PPSTSSELRP (359 aa)). Residues 427–437 (STTTSPTSNTT) are compositionally biased toward low complexity. A compositionally biased stretch (polar residues) spans 442-488 (PNTTTGLPSSTHVPTNLTAPASTGPTVSTADVTSPTPAGTTSGASPV). Over residues 507 to 570 (TSPTPAVTTP…AVTTPTPNAT (64 aa)) the composition is skewed to low complexity. The span at 575–616 (GETSPQANTTNHTLGGTSSTPVVTSQPKNATSAVTTGQHNIT) shows a compositional bias: polar residues. A compositionally biased stretch (low complexity) spans 617–631 (SSSTSSMSLRPSSIS). An N-linked (GlcNAc...) asparagine; by host glycan is attached at N650. The span at 654 to 669 (VTPASTSTHHVSTSSP) shows a compositional bias: low complexity. Polar residues predominate over residues 674 to 690 (GTTSQASGPGNSSTSTK). N-linked (GlcNAc...) asparagine; by host glycans are attached at residues N684, N695, N704, and N729. Residues 703–730 (KNATSPQAPSGQKTAVPTVTSTGGKANS) show a composition bias toward polar residues. The span at 731-741 (TTGGKHTTGHG) shows a compositional bias: low complexity. The span at 743 to 776 (RTSTEPTTDYGGDSTTPRTRYNATTYLPPSTSSE) shows a compositional bias: polar residues. N-linked (GlcNAc...) asparagine; by host glycans are attached at residues N764 and N807. Residues 810–830 (MLVLQWASLAVLTLLLLLVMA) traverse the membrane as a helical segment. Residues 831 to 856 (DCAFRRNLSTSHTYTTPPYDDAETYV) lie on the Intravirion side of the membrane.

The protein belongs to the Epstein-Barr GP350 family. As to quaternary structure, interacts with host CR2. In terms of processing, extensively glycosylated.

Its subcellular location is the virion membrane. The protein resides in the host membrane. In terms of biological role, initiates virion attachment to host B-lymphocyte cell, leading to virus entry. Acts by binding to host CR2 at the surface of B-lymphocytes, facilitating the binding of viral glycoprotein gp42 to HLA class II molecules. Attachment triggers virion-host membrane fusion and invasion of the host cell. This chain is Envelope glycoprotein GP350, found in Homo sapiens (Human).